A 223-amino-acid polypeptide reads, in one-letter code: Ribonuclease HII (223 aa).

The RNase H type-2 domain maps to 32-223 (FHIAGVDEVG…LKGRFRDNMS (192 aa)). A divalent metal cation-binding residues include aspartate 38, glutamate 39, and aspartate 130.

The protein belongs to the RNase HII family. The cofactor is Mn(2+). Mg(2+) is required as a cofactor.

The protein localises to the cytoplasm. The enzyme catalyses Endonucleolytic cleavage to 5'-phosphomonoester.. Functionally, endonuclease that specifically degrades the RNA of RNA-DNA hybrids. This Bartonella quintana (strain Toulouse) (Rochalimaea quintana) protein is Ribonuclease HII.